A 387-amino-acid chain; its full sequence is Alkanesulfonate monooxygenase (387 aa).

A disordered region spans residues 365 to 387; sequence HNSGPFGETVGNDYRPSRLASQS.

Belongs to the SsuD family.

It catalyses the reaction an alkanesulfonate + FMNH2 + O2 = an aldehyde + FMN + sulfite + H2O + 2 H(+). In terms of biological role, catalyzes the desulfonation of aliphatic sulfonates. This chain is Alkanesulfonate monooxygenase, found in Bradyrhizobium diazoefficiens (strain JCM 10833 / BCRC 13528 / IAM 13628 / NBRC 14792 / USDA 110).